A 506-amino-acid polypeptide reads, in one-letter code: Histidine ammonia-lyase (506 aa).

The 5-imidazolinone (Ala-Gly) cross-link spans 143 to 145 (ASG). Ser144 carries the post-translational modification 2,3-didehydroalanine (Ser).

It belongs to the PAL/histidase family. Contains an active site 4-methylidene-imidazol-5-one (MIO), which is formed autocatalytically by cyclization and dehydration of residues Ala-Ser-Gly.

It localises to the cytoplasm. It catalyses the reaction L-histidine = trans-urocanate + NH4(+). It participates in amino-acid degradation; L-histidine degradation into L-glutamate; N-formimidoyl-L-glutamate from L-histidine: step 1/3. In Citrobacter koseri (strain ATCC BAA-895 / CDC 4225-83 / SGSC4696), this protein is Histidine ammonia-lyase.